Here is a 941-residue protein sequence, read N- to C-terminus: Protocadherin alpha-12 (941 aa).

The first 29 residues, 1-29 (MVIIGPRGPGSQRLLLSLLLLAAWEVGSG), serve as a signal peptide directing secretion. Cadherin domains lie at 30–133 (QLHY…PPVF), 134–242 (RERE…GPAF), 243–350 (DKPS…VPEV), 351–455 (MVTS…APAF), 456–565 (AQPE…APAL), and 581–678 (VPRS…APKT). At 30–697 (QLHYSVYEEA…DPEAALVDIN (668 aa)) the chain is on the extracellular side. N-linked (GlcNAc...) asparagine glycosylation is found at N257 and N265. N548 carries an N-linked (GlcNAc...) asparagine glycan. The helical transmembrane segment at 698–718 (VYLIIAICAVSSLLVLTLLLY) threads the bilayer. Residues 719–941 (TALRCSAPPT…GNSTTDNSDQ (223 aa)) lie on the Cytoplasmic side of the membrane. PXXP repeat units follow at residues 734 to 737 (PGKP), 790 to 793 (PRQP), 823 to 826 (PGGP), 863 to 866 (GPGN), and 882 to 885 (PGSP). The 5 X 4 AA repeats of P-X-X-P stretch occupies residues 734–885 (PGKPTLVCSS…PDKFIIPGSP (152 aa)). The segment at 818 to 941 (ILRAGPGGPD…GNSTTDNSDQ (124 aa)) is disordered. Residues 900-914 (DKSDFITFGKKEETK) are compositionally biased toward basic and acidic residues.

It localises to the cell membrane. Potential calcium-dependent cell-adhesion protein. May be involved in the establishment and maintenance of specific neuronal connections in the brain. This chain is Protocadherin alpha-12 (PCDHA12), found in Pan troglodytes (Chimpanzee).